The following is a 166-amino-acid chain: ATP synthase subunit b (166 aa).

Residues 15 to 37 (TLYYLLIFAALLLLVKHFAWGPV) form a helical membrane-spanning segment.

It belongs to the ATPase B chain family. F-type ATPases have 2 components, F(1) - the catalytic core - and F(0) - the membrane proton channel. F(1) has five subunits: alpha(3), beta(3), gamma(1), delta(1), epsilon(1). F(0) has three main subunits: a(1), b(2) and c(10-14). The alpha and beta chains form an alternating ring which encloses part of the gamma chain. F(1) is attached to F(0) by a central stalk formed by the gamma and epsilon chains, while a peripheral stalk is formed by the delta and b chains.

The protein resides in the cell membrane. In terms of biological role, f(1)F(0) ATP synthase produces ATP from ADP in the presence of a proton or sodium gradient. F-type ATPases consist of two structural domains, F(1) containing the extramembraneous catalytic core and F(0) containing the membrane proton channel, linked together by a central stalk and a peripheral stalk. During catalysis, ATP synthesis in the catalytic domain of F(1) is coupled via a rotary mechanism of the central stalk subunits to proton translocation. Component of the F(0) channel, it forms part of the peripheral stalk, linking F(1) to F(0). This chain is ATP synthase subunit b, found in Lactobacillus gasseri (strain ATCC 33323 / DSM 20243 / BCRC 14619 / CIP 102991 / JCM 1131 / KCTC 3163 / NCIMB 11718 / NCTC 13722 / AM63).